The following is a 459-amino-acid chain: Ribulose bisphosphate carboxylase (459 aa).

N111 contributes to the substrate binding site. The Proton acceptor role is filled by K166. K168 lines the substrate pocket. Mg(2+)-binding residues include K191, D193, and E194. K191 carries the N6-carboxylysine modification. Catalysis depends on H287, which acts as the Proton acceptor. 3 residues coordinate substrate: R288, H321, and S368.

It belongs to the RuBisCO large chain family. Type II subfamily. Homodimer. Mg(2+) is required as a cofactor.

Its subcellular location is the cytoplasm. The enzyme catalyses 2 (2R)-3-phosphoglycerate + 2 H(+) = D-ribulose 1,5-bisphosphate + CO2 + H2O. It carries out the reaction D-ribulose 1,5-bisphosphate + O2 = 2-phosphoglycolate + (2R)-3-phosphoglycerate + 2 H(+). RuBisCO catalyzes two reactions: the carboxylation of D-ribulose 1,5-bisphosphate, the primary event in carbon dioxide fixation, as well as the oxidative fragmentation of the pentose substrate. Both reactions occur simultaneously and in competition at the same active site. The sequence is that of Ribulose bisphosphate carboxylase from Halothiobacillus neapolitanus (strain ATCC 23641 / c2) (Thiobacillus neapolitanus).